Here is a 449-residue protein sequence, read N- to C-terminus: MAKHYIPNSAHKEEMLKEIGLSSIDELFADIPGKFIRDELNLPEGKSEYEVFLEMNEILGKNKTVLEMPTFLGAGTYFHYIPAHVKYLIERSEFLTAYTPYQPEISQGMLQALFEYQSLIAELVGLPVVNASMYDWGTAMAEAALMTVRLHRGKRKKFIVPRHTHPERLQVLETYAKGPGVEIETVKWNERGQVDIEDLKEKVKDAAGVYVEIPNFFGLLEEEVREIGEIAHEAGAYFVVGVDPTILGIVEAPGELGADIVVGEASYFGNPMNFGGPRAGIFAVRNDMKLIRQMPGRLIGMTKDAEGKRAFVMTLQTREQHIRRAKATSNICSNEALVAVAAAIHIASLGPRGIRELGEVILKNTAYLKKRLSEVAEIPFDGVNFKDVLVRFEKPYKEIHEELLKRNIHGGYYVGKHFPELGESALFAATETTRKEWVDALISALREVI.

The protein belongs to the GcvP family. N-terminal subunit subfamily. The glycine cleavage system is composed of four proteins: P, T, L and H. In this organism, the P 'protein' is a heterodimer of two subunits.

It catalyses the reaction N(6)-[(R)-lipoyl]-L-lysyl-[glycine-cleavage complex H protein] + glycine + H(+) = N(6)-[(R)-S(8)-aminomethyldihydrolipoyl]-L-lysyl-[glycine-cleavage complex H protein] + CO2. Its function is as follows. The glycine cleavage system catalyzes the degradation of glycine. The P protein binds the alpha-amino group of glycine through its pyridoxal phosphate cofactor; CO(2) is released and the remaining methylamine moiety is then transferred to the lipoamide cofactor of the H protein. In Pyrococcus abyssi (strain GE5 / Orsay), this protein is Probable glycine dehydrogenase (decarboxylating) subunit 1.